A 90-amino-acid chain; its full sequence is MVKNSFISVISQEKKEENKGSVEFQVFNFNNKIRILTSHLELHRKDYSSQRGLRKILGKRQRLLSYLSKKNRVRYKELIGQLGILEQKAR.

The protein belongs to the universal ribosomal protein uS15 family. In terms of assembly, part of the 30S ribosomal subunit.

Its subcellular location is the plastid. The protein resides in the chloroplast. This is Small ribosomal subunit protein uS15c (rps15) from Buxus microphylla (Littleleaf boxwood).